We begin with the raw amino-acid sequence, 428 residues long: Adenylosuccinate synthetase, chloroplastic (428 aa).

GTP contacts are provided by residues 17–23 and 45–47; these read GDEGKGK and GHT. Residue D18 is the Proton acceptor of the active site. Mg(2+) contacts are provided by D18 and G45. Residues 18-21, 43-46, T135, R149, N226, T241, and R305 each bind IMP; these read DEGK and NAGH. H46 functions as the Proton donor in the catalytic mechanism. Residue 301–307 coordinates substrate; that stretch reads TTTGRPR. Residues R307, 333–335, and 416–418 contribute to the GTP site; these read KLD and GVG.

It belongs to the adenylosuccinate synthetase family. As to quaternary structure, homodimer. The cofactor is Mg(2+).

It is found in the plastid. The protein localises to the chloroplast. It carries out the reaction IMP + L-aspartate + GTP = N(6)-(1,2-dicarboxyethyl)-AMP + GDP + phosphate + 2 H(+). Its pathway is purine metabolism; AMP biosynthesis via de novo pathway; AMP from IMP: step 1/2. Its function is as follows. Plays an important role in the de novo pathway and in the salvage pathway of purine nucleotide biosynthesis. Catalyzes the first committed step in the biosynthesis of AMP from IMP. This chain is Adenylosuccinate synthetase, chloroplastic, found in Ostreococcus lucimarinus (strain CCE9901).